Here is a 468-residue protein sequence, read N- to C-terminus: Acyltransferase R4 (468 aa).

Transmembrane regions (helical) follow at residues 21–41 (GILSIIIFNAHLTPIIILGYD), 70–90 (LFTIPIVKLVYSASPAVCLFF), 133–153 (LNLLAMASMIVPFVLVKTGFF), 252–272 (FLAALVVMGIAVGSLECPLFW), 308–328 (DPFGKAVVLAIGCYFASYPTW), 388–408 (FAVYLVHFCLVISFGPGLFSW), and 423–443 (IGFGIAYAVLFIGVLLAAAMF).

The protein belongs to the acyltransferase 3 family.

Its subcellular location is the membrane. The protein operates within secondary metabolite biosynthesis. Functionally, acyltransferase; part of the gene cluster that mediates the biosynthesis of squalestatin S1 (SQS1, also known as zaragozic acid A), a heavily oxidized fungal polyketide that offers potent cholesterol lowering activity by targeting squalene synthase (SS). SQS1 is composed of a 2,8-dioxobicyclic[3.2.1]octane-3,4,5-tricarboxyclic acid core that is connected to two lipophilic polyketide arms. These initial steps feature the priming of an unusual benzoic acid starter unit onto the highly reducing polyketide synthase pks2, followed by oxaloacetate extension and product release to generate a tricarboxylic acid containing product. The phenylalanine ammonia lyase (PAL) M7 and the acyl-CoA ligase M9 are involved in transforming phenylalanine into benzoyl-CoA. The citrate synthase-like protein R3 is involved in connecting the C-alpha-carbons of the hexaketide chain and oxaloacetate to afford the tricarboxylic acid unit. The potential hydrolytic enzymes, M8 and M10, are in close proximity to pks2 and may participate in product release. On the other side, the tetraketide arm is synthesized by a the squalestatin tetraketide synthase pks1 and enzymatically esterified to the core in the last biosynthetic step, by the acetyltransferase M4. The biosynthesis of the tetraketide must involve 3 rounds of chain extension. After the first and second rounds methyl-transfer occurs, and in all rounds of extension the ketoreductase and dehydratase are active. The enoyl reductase and C-MeT of pks1 are not active in the final round of extension. The acetyltransferase M4 appears to have a broad substrate selectivity for its acyl CoA substrate, allowing the in vitro synthesis of novel squalestatins. The biosynthesis of SQS1 requires several oxidative steps likely performed by oxidoreductases M1, R1 and R2. Finally, in support of the identification of the cluster as being responsible for SQS1 production, the cluster contains a gene encoding a putative squalene synthase (SS) R6, suggesting a likely mechanism for self-resistance. The polypeptide is Acyltransferase R4 (Phoma sp. (strain ATCC 20986 / MF5453)).